Consider the following 876-residue polypeptide: Alanine--tRNA ligase (876 aa).

Positions 564, 568, 666, and 670 each coordinate Zn(2+).

This sequence belongs to the class-II aminoacyl-tRNA synthetase family. As to quaternary structure, homotetramer. Zn(2+) is required as a cofactor.

It is found in the cytoplasm. It carries out the reaction tRNA(Ala) + L-alanine + ATP = L-alanyl-tRNA(Ala) + AMP + diphosphate. Catalyzes the attachment of alanine to tRNA(Ala) in a two-step reaction: alanine is first activated by ATP to form Ala-AMP and then transferred to the acceptor end of tRNA(Ala). Also edits incorrectly charged Ser-tRNA(Ala) and Gly-tRNA(Ala) via its editing domain. The sequence is that of Alanine--tRNA ligase from Salmonella paratyphi B (strain ATCC BAA-1250 / SPB7).